Consider the following 541-residue polypeptide: MAGVLAGDCSFGESGVSSYSRNSNEKQDEVARWYFGRKEIEENSPSRLDSIDLKKETYLRKSYCTFLQDLGMRLKVPQVTIATAIIFCHRFFIRQSHARNDRRTIATVCMFLAGKVEETPRPLKDVIVVSYEIIHKKDPTTAQKIKQKEVYEQQKELILNGEKIVLSTLGFDFNVYHPYKPLVEAIKKFKVAQNALAQVAWNFVNDGLRTSLCLQFKPHHIAAGAIFLAAKFLKVKLPSDGEKVWWQEFDVTPRQLEDVSNQMLELYEQNRVPASQVSEVESSVGGGSAHHVGSRPSARLTHEHSNSDNLGGSTKATQNRSNDNGSGEAGSVITEQKGERDTETKDSMHTESHPAHKSRSGVEAPGEDKIEKAGAHFPEDDKSRIVGTADVTVSQSPKDIKMFRDKVKAKLEAKKVQGEKTRKKDLVDEDDLIERELEDVELAVEDDKDIQNKSSMGTEHGEILDGNNLVVNTEEGEMIDDVSSTMPSRKRKMESPCEKQLGEGKRRHDNSENVEEGQKTNPGGSSHSYGDREPRRHSQER.

Residues 277-366 (VSEVESSVGG…KSRSGVEAPG (90 aa)) are disordered. Over residues 307 to 325 (SDNLGGSTKATQNRSNDNG) the composition is skewed to polar residues. The span at 336–354 (QKGERDTETKDSMHTESHP) shows a compositional bias: basic and acidic residues. S396 is modified (phosphoserine). The segment at 445 to 541 (EDDKDIQNKS…REPRRHSQER (97 aa)) is disordered. Basic and acidic residues predominate over residues 493-511 (MESPCEKQLGEGKRRHDNS). The span at 519 to 528 (KTNPGGSSHS) shows a compositional bias: polar residues. Residues 529–541 (YGDREPRRHSQER) are compositionally biased toward basic and acidic residues.

Belongs to the cyclin family. Cyclin T subfamily.

This is Cyclin-T1-4 (CYCT1-4) from Arabidopsis thaliana (Mouse-ear cress).